A 763-amino-acid chain; its full sequence is Phosphoglycerol transferase I (763 aa).

A run of 4 helical transmembrane segments spans residues 1-21 (MSEL…AWKA), 26-46 (WWFA…ITLF), 77-97 (ILPG…LGWI), and 108-128 (FGYS…SPAF).

This sequence belongs to the OpgB family.

The protein resides in the cell inner membrane. It catalyses the reaction a phosphatidylglycerol + a membrane-derived-oligosaccharide D-glucose = a 1,2-diacyl-sn-glycerol + a membrane-derived-oligosaccharide 6-(glycerophospho)-D-glucose.. It functions in the pathway glycan metabolism; osmoregulated periplasmic glucan (OPG) biosynthesis. Its function is as follows. Transfers a phosphoglycerol residue from phosphatidylglycerol to the membrane-bound nascent glucan backbones. The polypeptide is Phosphoglycerol transferase I (Escherichia coli (strain 55989 / EAEC)).